Consider the following 333-residue polypeptide: MASTKEKLITHVSKEEPAGPTNKVTVVGVGMVGMAAAISILLKDLTDELALVDVMEDKLKGEAMDLQHGSLFLKTHKIVADKDYSVTANSKVVVVTAGARQQEGESRLNLVQRNVNIFKFIIPNIIKYSPNCILLVVSNPVDILTYVAWKLSGLPRNRVIGSGTNLDSARFRHLMGEKLGIHPSNCHGWVIGEHGDSSVPVWSGVNVAGVFLQGLNPDMGTDKDKEDWKSVHKMVVDSAYEVIKLKGYTSWAIGMSAADLCQSILKNLRKCHPVSTLVKGMHGVNEEVFLSVPCILGNSGLTDVVHMTLKSDEEKQLVKSAETLWGVQKDLTL.

Residues 30 to 58 (GMVG…MEDK) and Arg-100 each bind NAD(+). Residues Arg-107, Asn-139, and Arg-170 each contribute to the substrate site. Asn-139 provides a ligand contact to NAD(+). His-194 serves as the catalytic Proton acceptor. Position 249 (Thr-249) interacts with substrate.

Belongs to the LDH/MDH superfamily. LDH family. In terms of assembly, homotetramer.

The protein resides in the cytoplasm. It catalyses the reaction (S)-lactate + NAD(+) = pyruvate + NADH + H(+). The protein operates within fermentation; pyruvate fermentation to lactate; (S)-lactate from pyruvate: step 1/1. The sequence is that of L-lactate dehydrogenase A chain (ldha) from Cyprinus carpio (Common carp).